Consider the following 405-residue polypeptide: Elongation factor Tu (405 aa).

Residues 10 to 215 enclose the tr-type G domain; the sequence is KPHVNVGTIG…AVDSYIPTPE (206 aa). The interval 19–26 is G1; that stretch reads GHVDHGKT. 19–26 contacts GTP; that stretch reads GHVDHGKT. Thr26 serves as a coordination point for Mg(2+). Residues 61-65 form a G2 region; it reads GITIN. Positions 82–85 are G3; the sequence is DCPG. GTP-binding positions include 82 to 86 and 137 to 140; these read DCPGH and NKVD. The G4 stretch occupies residues 137 to 140; it reads NKVD. A G5 region spans residues 175–177; it reads SAL.

This sequence belongs to the TRAFAC class translation factor GTPase superfamily. Classic translation factor GTPase family. EF-Tu/EF-1A subfamily. Monomer.

The protein localises to the cytoplasm. The enzyme catalyses GTP + H2O = GDP + phosphate + H(+). GTP hydrolase that promotes the GTP-dependent binding of aminoacyl-tRNA to the A-site of ribosomes during protein biosynthesis. The polypeptide is Elongation factor Tu (Deinonema sp).